The primary structure comprises 513 residues: GMP synthase [glutamine-hydrolyzing] (513 aa).

One can recognise a Glutamine amidotransferase type-1 domain in the interval 8–198 (KIIVLDYGSQ…ALNICGAKGN (191 aa)). Residue Cys85 is the Nucleophile of the active site. Residues His172 and Glu174 contribute to the active site. A GMPS ATP-PPase domain is found at 199–388 (WSMENFIDMQ…LGMPDEIVWR (190 aa)). Position 226 to 232 (226 to 232 (SGGVDSS)) interacts with ATP.

In terms of assembly, homodimer.

The catalysed reaction is XMP + L-glutamine + ATP + H2O = GMP + L-glutamate + AMP + diphosphate + 2 H(+). The protein operates within purine metabolism; GMP biosynthesis; GMP from XMP (L-Gln route): step 1/1. In terms of biological role, catalyzes the synthesis of GMP from XMP. This is GMP synthase [glutamine-hydrolyzing] (guaA) from Lactococcus lactis subsp. cremoris (strain MG1363).